A 160-amino-acid chain; its full sequence is Putative pre-16S rRNA nuclease (160 aa).

It belongs to the YqgF nuclease family.

The protein resides in the cytoplasm. Could be a nuclease involved in processing of the 5'-end of pre-16S rRNA. The sequence is that of Putative pre-16S rRNA nuclease from Gluconobacter oxydans (strain 621H) (Gluconobacter suboxydans).